Consider the following 593-residue polypeptide: UvrABC system protein C (593 aa).

In terms of domain architecture, GIY-YIG spans 17 to 94 (MEPGCYLMKD…IKQYQPRYNI (78 aa)). Residues 199–234 (KTILKSLEERMLTASESLDFERAKEYRDLIQHIQNL) form the UVR domain.

It belongs to the UvrC family. Interacts with UvrB in an incision complex.

The protein localises to the cytoplasm. Its function is as follows. The UvrABC repair system catalyzes the recognition and processing of DNA lesions. UvrC both incises the 5' and 3' sides of the lesion. The N-terminal half is responsible for the 3' incision and the C-terminal half is responsible for the 5' incision. The sequence is that of UvrABC system protein C from Staphylococcus aureus (strain Mu3 / ATCC 700698).